The following is a 198-amino-acid chain: Hookworm platelet inhibitor 1 (198 aa).

The first 17 residues, 1–17 (MSSYLLVLVAILGFAYA), serve as a signal peptide directing secretion. Intrachain disulfides connect Cys-24-Cys-65, Cys-78-Cys-146, Cys-141-Cys-154, Cys-174-Cys-186, and Cys-177-Cys-195.

The protein belongs to the CRISP family. Monomer. As to expression, detected in cephalic glands.

It is found in the secreted. Hookworms inhibitor of platelet aggregation and adhesion. Native protein inhibits platelet aggregation induced by ADP, epinephrine, and thrombin. In addition, it prevents adhesion of resting platelets to immobilized fibrinogen and collagen. May act by binding to glycoprotein IIb/IIIa (ITGA2B/ITGB3) and integrin alpha-2/beta-1 (ITGA1/ITGB1), respectively. It is noteworthy that the recombinant protein fails to inhibit binding to fibrinogen (through ITGA2B/ITGB3) and collagen (through ITGA1/ITGB1). The protein is Hookworm platelet inhibitor 1 of Ancylostoma caninum (Dog hookworm).